Consider the following 328-residue polypeptide: tRNA N6-adenosine threonylcarbamoyltransferase (328 aa).

The Fe cation site is built by His-111 and His-115. Substrate is bound by residues Leu-133 to Gly-137, Asp-166, Gly-179, Asp-183, and Asn-270. Fe cation is bound at residue Asp-296.

It belongs to the KAE1 / TsaD family. The cofactor is Fe(2+).

The protein resides in the cytoplasm. It catalyses the reaction L-threonylcarbamoyladenylate + adenosine(37) in tRNA = N(6)-L-threonylcarbamoyladenosine(37) in tRNA + AMP + H(+). Its function is as follows. Required for the formation of a threonylcarbamoyl group on adenosine at position 37 (t(6)A37) in tRNAs that read codons beginning with adenine. Is involved in the transfer of the threonylcarbamoyl moiety of threonylcarbamoyl-AMP (TC-AMP) to the N6 group of A37, together with TsaE and TsaB. TsaD likely plays a direct catalytic role in this reaction. The polypeptide is tRNA N6-adenosine threonylcarbamoyltransferase (Phytoplasma australiense).